Consider the following 91-residue polypeptide: Acylphosphatase (91 aa).

In terms of domain architecture, Acylphosphatase-like spans 3–91 (TVTMRVTGLV…EKFTRFSVVY (89 aa)). Catalysis depends on residues Arg18 and Asn36.

The protein belongs to the acylphosphatase family.

The enzyme catalyses an acyl phosphate + H2O = a carboxylate + phosphate + H(+). The protein is Acylphosphatase (acyP) of Lactobacillus johnsonii (strain CNCM I-12250 / La1 / NCC 533).